We begin with the raw amino-acid sequence, 162 residues long: NAD(P)H-quinone oxidoreductase subunit N (162 aa).

It belongs to the complex I NdhN subunit family. As to quaternary structure, NDH-1 can be composed of about 15 different subunits; different subcomplexes with different compositions have been identified which probably have different functions.

Its subcellular location is the cellular thylakoid membrane. The catalysed reaction is a plastoquinone + NADH + (n+1) H(+)(in) = a plastoquinol + NAD(+) + n H(+)(out). It carries out the reaction a plastoquinone + NADPH + (n+1) H(+)(in) = a plastoquinol + NADP(+) + n H(+)(out). Functionally, NDH-1 shuttles electrons from an unknown electron donor, via FMN and iron-sulfur (Fe-S) centers, to quinones in the respiratory and/or the photosynthetic chain. The immediate electron acceptor for the enzyme in this species is believed to be plastoquinone. Couples the redox reaction to proton translocation, and thus conserves the redox energy in a proton gradient. Cyanobacterial NDH-1 also plays a role in inorganic carbon-concentration. The protein is NAD(P)H-quinone oxidoreductase subunit N of Nostoc sp. (strain PCC 7120 / SAG 25.82 / UTEX 2576).